A 317-amino-acid chain; its full sequence is Transaldolase (317 aa).

The active-site Schiff-base intermediate with substrate is the Lys-126.

It belongs to the transaldolase family. Type 1 subfamily. In terms of assembly, homodimer.

Its subcellular location is the cytoplasm. The enzyme catalyses D-sedoheptulose 7-phosphate + D-glyceraldehyde 3-phosphate = D-erythrose 4-phosphate + beta-D-fructose 6-phosphate. It functions in the pathway carbohydrate degradation; pentose phosphate pathway; D-glyceraldehyde 3-phosphate and beta-D-fructose 6-phosphate from D-ribose 5-phosphate and D-xylulose 5-phosphate (non-oxidative stage): step 2/3. Its function is as follows. Transaldolase is important for the balance of metabolites in the pentose-phosphate pathway. The polypeptide is Transaldolase (Burkholderia ambifaria (strain MC40-6)).